We begin with the raw amino-acid sequence, 391 residues long: Polyisoprenyl-teichoic acid--peptidoglycan teichoic acid transferase TagV (391 aa).

Topologically, residues 1 to 23 (MAERVRVRVRKKKKSKRRKILKR) are cytoplasmic. Residues 24–44 (IMLLFALALLVVVGLGGYKLY) form a helical; Signal-anchor for type II membrane protein membrane-spanning segment. Residues 45 to 391 (KTINAADESY…TTNSTTDSSY (347 aa)) lie on the Extracellular side of the membrane. The tract at residues 329–391 (DYTPDTSTGT…TTNSTTDSSY (63 aa)) is disordered. Residues 333 to 391 (DTSTGTSGTEDGTDSSSSSGSTGSTGTTTDGTTNGSSYSNDSSTSSNNSTTNSTTDSSY) show a composition bias toward low complexity.

Belongs to the LytR/CpsA/Psr (LCP) family.

It is found in the cell membrane. It participates in cell wall biogenesis. May catalyze the final step in cell wall teichoic acid biosynthesis, the transfer of the anionic cell wall polymers (APs) from their lipid-linked precursor to the cell wall peptidoglycan (PG). The protein is Polyisoprenyl-teichoic acid--peptidoglycan teichoic acid transferase TagV of Bacillus subtilis (strain 168).